The chain runs to 299 residues: Probable GTP 3',8-cyclase (299 aa).

The region spanning 4-229 is the Radical SAM core domain; that stretch reads LHNREIKSLR…MQNRKKYLVD (226 aa). Arg13 provides a ligand contact to GTP. Residues Cys20 and Cys24 each coordinate [4Fe-4S] cluster. Tyr26 serves as a coordination point for S-adenosyl-L-methionine. Cys27 contacts [4Fe-4S] cluster. Lys61 contributes to the GTP binding site. Gly65 is an S-adenosyl-L-methionine binding site. Thr94 lines the GTP pocket. Residue Ser118 participates in S-adenosyl-L-methionine binding. Lys154 contributes to the GTP binding site. Residues Cys245 and Cys248 each contribute to the [4Fe-4S] cluster site. 250 to 252 serves as a coordination point for GTP; it reads RIR. Cys262 contacts [4Fe-4S] cluster.

It belongs to the radical SAM superfamily. MoaA family. Requires [4Fe-4S] cluster as cofactor.

The catalysed reaction is GTP + AH2 + S-adenosyl-L-methionine = (8S)-3',8-cyclo-7,8-dihydroguanosine 5'-triphosphate + 5'-deoxyadenosine + L-methionine + A + H(+). It participates in cofactor biosynthesis; molybdopterin biosynthesis. Its function is as follows. Catalyzes the cyclization of GTP to (8S)-3',8-cyclo-7,8-dihydroguanosine 5'-triphosphate. This is Probable GTP 3',8-cyclase from Methanococcus aeolicus (strain ATCC BAA-1280 / DSM 17508 / OCM 812 / Nankai-3).